A 135-amino-acid polypeptide reads, in one-letter code: M-zodatoxin-Lt8q (135 aa).

The N-terminal stretch at 1 to 20 (MKYFVVALALVAAFACIAES) is a signal peptide. Residues 21 to 60 (KPAESEHELAEVEEENELADLEDAVWLEHLADLSDLEEAR) constitute a propeptide that is removed on maturation.

Belongs to the cationic peptide 06 (cytoinsectotoxin) family. As to expression, expressed by the venom gland.

It is found in the secreted. Functionally, insecticidal, cytolytic and antimicrobial peptide. Forms voltage-dependent, ion-permeable channels in membranes. At high concentration causes cell membrane lysis. This chain is M-zodatoxin-Lt8q (cit 1-16), found in Lachesana tarabaevi (Spider).